The following is a 964-amino-acid chain: Chromatin assembly factor 1 subunit A (964 aa).

Residues 1–49 (MLEEPECGAPGARGEAAAMDCKDRPAFPVKKLIQARLPFKRLNLVPKEK) are binds to PCNA. Positions 1 to 316 (MLEEPECGAP…LHTGPSPFPA (316 aa)) are binds to CBX1 chromo shadow domain. A phosphoserine mark is found at Ser-126, Ser-141, and Ser-144. The interval 146 to 232 (AQKNINGVPD…KDRDGWSEAG (87 aa)) is disordered. A compositionally biased stretch (basic and acidic residues) spans 156 to 172 (KAGDDRGLPKARQKDEL). Lys-185 is covalently cross-linked (Glycyl lysine isopeptide (Lys-Gly) (interchain with G-Cter in SUMO1); alternate). Lys-185 participates in a covalent cross-link: Glycyl lysine isopeptide (Lys-Gly) (interchain with G-Cter in SUMO2); alternate. Positions 236–249 (FKGKMPVVVLQDIL) match the PxVxL motif motif. Disordered regions lie at residues 253-437 (PPAR…REEE) and 601-641 (DSDE…VPHG). Positions 284 to 298 (LSHSSLSSSSPTSSP) are enriched in low complexity. A Phosphoserine modification is found at Ser-312. A coiled-coil region spans residues 329 to 453 (RGSAEKNKMK…KAEITRFFQK (125 aa)). Over residues 331–437 (SAEKNKMKLQ…EEEKRLREEE (107 aa)) the composition is skewed to basic and acidic residues. 2 stretches are compositionally biased toward acidic residues: residues 601–612 (DSDEEWEEEEPG) and 620–635 (GDDD…EDDG). Residues 644–680 (SEDEGVTEECADPENHKVRQKLKAKEWDEFLAKGKRF) form a necessary for homodimerization and competence for chromatin assembly region. The binds to p60 stretch occupies residues 662-964 (RQKLKAKEWD…FVSPSSLRLS (303 aa)). Phosphothreonine is present on Thr-723. The interval 769-799 (RDAGSPEDSAASPPSPGPARPQTPTASEDVA) is disordered. Residues 770 to 780 (DAGSPEDSAAS) are compositionally biased toward low complexity. Phosphoserine is present on residues Ser-773, Ser-783, Ser-811, Ser-876, and Ser-881. The disordered stretch occupies residues 859–878 (EDSGSVPAPGPGQGMPVSLK). Disordered regions lie at residues 897–920 (DGQV…DDEG) and 933–964 (IQAP…LRLS). Positions 904 to 920 (DLDDFQADTEEEDDDEG) are enriched in acidic residues. Positions 949–964 (MDTSESFVSPSSLRLS) are enriched in polar residues. Ser-959 carries the post-translational modification Phosphoserine.

It belongs to the CHAF1A family. In terms of assembly, homodimer. Part of the CAF-1 complex that contains RBBP4, CHAF1B and CHAF1A. CHAF1A binds directly to CHAF1B. Only minor amounts of RBBP4 are complexed with CHAF1A and CHAF1B in G1 phase. Interacts with PCNA; the interaction is direct. Interacts (via the PxVxL motif) with CBX5; the interaction is direct. Interacts with MBD1. Interacts with histones H3.1, H3.2 and H3.1t.

The protein resides in the nucleus. Functionally, acts as a component of the histone chaperone complex chromatin assembly factor 1 (CAF-1), which assembles histone octamers onto DNA during replication and repair. CAF-1 performs the first step of the nucleosome assembly process, bringing newly synthesized histones H3 and H4 to replicating DNA; histones H2A/H2B can bind to this chromatin precursor subsequent to DNA replication to complete the histone octamer. It may play a role in heterochromatin maintenance in proliferating cells by bringing newly synthesized cbx proteins to heterochromatic DNA replication foci. This chain is Chromatin assembly factor 1 subunit A (CHAF1A), found in Bos taurus (Bovine).